The sequence spans 106 residues: Large ribosomal subunit protein cL38 (106 aa).

The N-terminal 39 residues, 1-39, are a transit peptide targeting the chloroplast; it reads MSVSAIFGTGIVTVAASPVLRQFQVPKLGNGGGLGMVIE. Residues 42–70 form a disordered region; it reads SRPQKKSTAHHRKTRPKKTQPWDIKRKPT. Positions 44 to 59 are enriched in basic residues; it reads PQKKSTAHHRKTRPKK.

This sequence belongs to the chloroplast-specific ribosomal protein cL38 family. As to quaternary structure, part of the 50S ribosomal subunit.

Its subcellular location is the plastid. It is found in the chloroplast. The polypeptide is Large ribosomal subunit protein cL38 (PSRP6) (Arabidopsis thaliana (Mouse-ear cress)).